A 321-amino-acid chain; its full sequence is Transaldolase (321 aa).

K132 (schiff-base intermediate with substrate) is an active-site residue.

This sequence belongs to the transaldolase family. Type 1 subfamily. In terms of assembly, homodimer.

It is found in the cytoplasm. The enzyme catalyses D-sedoheptulose 7-phosphate + D-glyceraldehyde 3-phosphate = D-erythrose 4-phosphate + beta-D-fructose 6-phosphate. The protein operates within carbohydrate degradation; pentose phosphate pathway; D-glyceraldehyde 3-phosphate and beta-D-fructose 6-phosphate from D-ribose 5-phosphate and D-xylulose 5-phosphate (non-oxidative stage): step 2/3. In terms of biological role, transaldolase is important for the balance of metabolites in the pentose-phosphate pathway. The polypeptide is Transaldolase (Rhizobium rhizogenes (strain K84 / ATCC BAA-868) (Agrobacterium radiobacter)).